We begin with the raw amino-acid sequence, 173 residues long: Large ribosomal subunit protein uL10 (173 aa).

It belongs to the universal ribosomal protein uL10 family. Part of the ribosomal stalk of the 50S ribosomal subunit. The N-terminus interacts with L11 and the large rRNA to form the base of the stalk. The C-terminus forms an elongated spine to which L12 dimers bind in a sequential fashion forming a multimeric L10(L12)X complex.

Functionally, forms part of the ribosomal stalk, playing a central role in the interaction of the ribosome with GTP-bound translation factors. This chain is Large ribosomal subunit protein uL10, found in Cupriavidus pinatubonensis (strain JMP 134 / LMG 1197) (Cupriavidus necator (strain JMP 134)).